Consider the following 512-residue polypeptide: GMP synthase [glutamine-hydrolyzing] (512 aa).

Positions 7–197 (LVLVVDFGGQ…LFKVAGLKAD (191 aa)) constitute a Glutamine amidotransferase type-1 domain. The active-site Nucleophile is Cys84. Catalysis depends on residues His171 and Glu173. Residues 198-387 (WSMASFAEEK…LGIPHKLVWR (190 aa)) form the GMPS ATP-PPase domain. ATP is bound at residue 225 to 231 (SGGVDSS).

As to quaternary structure, homodimer.

The catalysed reaction is XMP + L-glutamine + ATP + H2O = GMP + L-glutamate + AMP + diphosphate + 2 H(+). It participates in purine metabolism; GMP biosynthesis; GMP from XMP (L-Gln route): step 1/1. In terms of biological role, catalyzes the synthesis of GMP from XMP. The chain is GMP synthase [glutamine-hydrolyzing] from Clostridium novyi (strain NT).